A 66-amino-acid polypeptide reads, in one-letter code: KEGYIVNYHDGCKYECYKLGDNDYCLRECRARYGKGAGGYCYAFGCWCTHLYEQAVVWPLPKKTCN.

Residues 1 to 66 (KEGYIVNYHD…VWPLPKKTCN (66 aa)) form the LCN-type CS-alpha/beta domain. Cystine bridges form between Cys12-Cys65, Cys16-Cys41, Cys25-Cys46, and Cys29-Cys48. At Asn66 the chain carries Asparagine amide.

The protein belongs to the long (4 C-C) scorpion toxin superfamily. Sodium channel inhibitor family. Beta subfamily. In terms of tissue distribution, expressed by the venom gland.

Its subcellular location is the secreted. Functionally, beta toxins bind voltage-independently at site-4 of sodium channels and shift the voltage of activation toward more negative potentials thereby affecting sodium channel activation and promoting spontaneous and repetitive firing. A mixture of Cbo2 and Cbo3 is weakly active on the human voltage-gated sodium channels Nav1.4/SCN4A and Nav1.6/SCN8A when tested at 200 nM. In vivo, is toxic to mice when intraperitoneally injected. This is Beta-toxin Cbo2 from Centruroides bonito (Scorpion).